We begin with the raw amino-acid sequence, 430 residues long: Serine--tRNA ligase (430 aa).

237 to 239 (TAE) provides a ligand contact to L-serine. 268–270 (RSE) lines the ATP pocket. Glu291 contacts L-serine. 355–358 (EISS) serves as a coordination point for ATP. Ser391 is an L-serine binding site.

It belongs to the class-II aminoacyl-tRNA synthetase family. Type-1 seryl-tRNA synthetase subfamily. Homodimer. The tRNA molecule binds across the dimer.

The protein resides in the cytoplasm. The enzyme catalyses tRNA(Ser) + L-serine + ATP = L-seryl-tRNA(Ser) + AMP + diphosphate + H(+). The catalysed reaction is tRNA(Sec) + L-serine + ATP = L-seryl-tRNA(Sec) + AMP + diphosphate + H(+). The protein operates within aminoacyl-tRNA biosynthesis; selenocysteinyl-tRNA(Sec) biosynthesis; L-seryl-tRNA(Sec) from L-serine and tRNA(Sec): step 1/1. Catalyzes the attachment of serine to tRNA(Ser). Is also able to aminoacylate tRNA(Sec) with serine, to form the misacylated tRNA L-seryl-tRNA(Sec), which will be further converted into selenocysteinyl-tRNA(Sec). In Yersinia enterocolitica serotype O:8 / biotype 1B (strain NCTC 13174 / 8081), this protein is Serine--tRNA ligase.